The following is a 199-amino-acid chain: uncharacterized protein (199 aa).

The N-terminal stretch at 1–23 (MKPGCTLFFLLCSALTVTTEAHA) is a signal peptide.

This is an uncharacterized protein from Escherichia coli (strain K12).